The chain runs to 341 residues: Lipoyl synthase (341 aa).

[4Fe-4S] cluster is bound by residues C85, C90, C96, C111, C115, C118, and S325. In terms of domain architecture, Radical SAM core spans 97–314 (FSGGTATFMI…AEEGYKMGFK (218 aa)).

This sequence belongs to the radical SAM superfamily. Lipoyl synthase family. It depends on [4Fe-4S] cluster as a cofactor.

The protein resides in the cytoplasm. The catalysed reaction is [[Fe-S] cluster scaffold protein carrying a second [4Fe-4S](2+) cluster] + N(6)-octanoyl-L-lysyl-[protein] + 2 oxidized [2Fe-2S]-[ferredoxin] + 2 S-adenosyl-L-methionine + 4 H(+) = [[Fe-S] cluster scaffold protein] + N(6)-[(R)-dihydrolipoyl]-L-lysyl-[protein] + 4 Fe(3+) + 2 hydrogen sulfide + 2 5'-deoxyadenosine + 2 L-methionine + 2 reduced [2Fe-2S]-[ferredoxin]. It participates in protein modification; protein lipoylation via endogenous pathway; protein N(6)-(lipoyl)lysine from octanoyl-[acyl-carrier-protein]: step 2/2. Functionally, catalyzes the radical-mediated insertion of two sulfur atoms into the C-6 and C-8 positions of the octanoyl moiety bound to the lipoyl domains of lipoate-dependent enzymes, thereby converting the octanoylated domains into lipoylated derivatives. In Pseudomonas fluorescens (strain SBW25), this protein is Lipoyl synthase.